The sequence spans 1183 residues: Rab11 family-interacting protein 3 (1183 aa).

A disordered region spans residues 423-448 (AEDPSTESLPRKNGQEESKSALPVST). A compositionally biased stretch (basic and acidic residues) spans 431 to 441 (LPRKNGQEESK). 2 EF-hand domains span residues 706–741 (EEQS…YGAE) and 738–773 (YGAE…ISNE). Ca(2+)-binding residues include aspartate 719, aspartate 721, aspartate 723, glutamate 730, aspartate 751, serine 753, and aspartate 762. Positions 902–1121 (ELEKDSLESE…NGQIINLSIQ (220 aa)) form a coiled coil. The segment at 911 to 1015 (EEQHARLRQE…LQDEADDITQ (105 aa)) is ARF-binding domain (ABD). The segment at 1005–1044 (KLQDEADDITQRLNEESESRRKMSDKLSHERHTNQKEKEC) is disordered. An FIP-RBD domain is found at 1121–1183 (QGAKSLFTES…ESNPSILEVK (63 aa)).

It localises to the recycling endosome membrane. The protein resides in the cytoplasm. It is found in the cytoskeleton. The protein localises to the microtubule organizing center. Its subcellular location is the centrosome. It localises to the cleavage furrow. The protein resides in the midbody. It is found in the golgi apparatus membrane. The protein localises to the golgi apparatus. Its subcellular location is the trans-Golgi network membrane. Functionally, downstream effector molecule for Rab11 GTPase which acts as a regulator of endocytic trafficking, cytokinesis and intracellular ciliogenesis by participating in membrane delivery. The sequence is that of Rab11 family-interacting protein 3 (rab11fip3) from Danio rerio (Zebrafish).